Reading from the N-terminus, the 382-residue chain is Alkanesulfonate monooxygenase (382 aa).

The protein belongs to the SsuD family. As to quaternary structure, homotetramer.

It carries out the reaction an alkanesulfonate + FMNH2 + O2 = an aldehyde + FMN + sulfite + H2O + 2 H(+). Its function is as follows. Catalyzes the desulfonation of aliphatic sulfonates. This Yersinia pseudotuberculosis serotype IB (strain PB1/+) protein is Alkanesulfonate monooxygenase.